Reading from the N-terminus, the 85-residue chain is N.vectensis toxin 1 6 (85 aa).

A signal peptide spans 1–20 (MASFKIVIVCLALLVAVACA). A propeptide spanning residues 21-36 (RRRDMMSDDELDYHYS) is cleaved from the precursor. 3 cysteine pairs are disulfide-bonded: Cys-42-Cys-82, Cys-44-Cys-72, and Cys-65-Cys-83.

It belongs to the sea anemone sodium channel inhibitory toxin family. Type II subfamily. As to expression, expressed in ectodermal glands and in clumps outside of the extodermal layer. Is not expressed in nematocytes. In adult female tissues, shows similar expression levels in mesenteries (gametes-producing tissue), tentacles, pharynx and physa.

It localises to the secreted. In terms of biological role, binds to site 3 of voltage-gated sodium channels and inhibits the inactivation process. Is highly active on DmNav1/TipE (drosophila) and is only extremely weakly active on rat Nav1.4-beta-1/SCN4A-SCN1B, and on human Nav1.5-beta-1/SCN5A-beta-1. This reveals high specificity for arthropod over mammalian channels. In vivo, when released into the medium, this recombinant toxin induces impaired swimming, paralysis and death of the crustacean A.nauplii within several hours. Also causes paralysis of cherry shrimps immediately after injection at very low doses. Its effect on zebrafish (D.rerio) larvae is also rapid, since it induces tail twitching accompanied by impaired swimming after 20 minutes and complete paralysis within 45 minutes. It has also been observed to cause death of zebrafish larvae within 1 hour. In Nematostella vectensis (Starlet sea anemone), this protein is N.vectensis toxin 1 6.